Consider the following 350-residue polypeptide: MENGDIPEDANEHCPGPQSESAGKSDSCAGCPNQEACATAPKGPDPDLVAIAERMSTVKHKILVLSGKGGVGKSTFSAQLSFALAGMDHQVGLMDIDICGPSIPKMLGLEGQEIHQSNLGWSPVYVEDNLGVMSIGFMLPNSDEAVIWRGPRKNGLIKQFLKDVYWGEIDYLVVDAPPGTSDEHISIVQYLLPTGIDGAIIVTTPQEVSLIDVRKEVSFCKKVGVPVLGVVENMSGLSQPLKDVKFMKLATETGSSINVTEDVIACLRKNAPELLDIVACSEVFDSSGGGAERMCREMGVPFLGKVPMDPQLCKAAEQGKSCFEDNKCLISAPALKSIIQKVVPSTVMTE.

Residues 1 to 30 form a disordered region; it reads MENGDIPEDANEHCPGPQSESAGKSDSCAG. Residues Cys14, Cys28, Cys31, and Cys37 each coordinate [4Fe-4S] cluster. Position 67 to 74 (67 to 74) interacts with ATP; sequence GKGGVGKS.

Belongs to the Mrp/NBP35 ATP-binding proteins family. NUBP1/NBP35 subfamily. Homodimer and homotetramer. Predominantly homodimeric. Requires [4Fe-4S] cluster as cofactor.

It is found in the cytoplasm. In terms of biological role, component of the cytosolic iron-sulfur (Fe-S) protein assembly (CIA) machinery. Required for maturation of extramitochondrial Fe-S proteins. Functions as a Fe-S scaffold, mediating the de novo assembly of an Fe-S cluster and its transfer to target apoproteins. Essential for embryo development. This chain is Cytosolic Fe-S cluster assembly factor NBP35, found in Arabidopsis thaliana (Mouse-ear cress).